A 149-amino-acid polypeptide reads, in one-letter code: Transcriptional repressor NrdR (149 aa).

A zinc finger lies at 3–34 (CPFCSATDTKVIDSRLVAEGHQVRRRRECTEC). The ATP-cone domain occupies 49 to 139 (PRVIKRDGSR…VYRAFEDVSE (91 aa)).

This sequence belongs to the NrdR family. Zn(2+) is required as a cofactor.

Negatively regulates transcription of bacterial ribonucleotide reductase nrd genes and operons by binding to NrdR-boxes. This Shewanella putrefaciens (strain CN-32 / ATCC BAA-453) protein is Transcriptional repressor NrdR.